Here is a 1745-residue protein sequence, read N- to C-terminus: Collagen alpha-3(V) chain (1745 aa).

A signal peptide spans 1–29 (MGNRRDLGQPRAGLCLLLAALQLLPGTQA). Residues 62 to 224 (DRAFRIGQAS…QACERYLPDC (163 aa)) form the Laminin G-like domain. N102 and N141 each carry an N-linked (GlcNAc...) asparagine glycan. The nonhelical region stretch occupies residues 211–391 (QAAFQACERY…AVIEKGQQFE (181 aa)). Disordered regions lie at residues 230 to 304 (AATV…TPTP), 322 to 362 (RSLD…EYPS), 387 to 439 (GQQF…RGPP), and 476 to 1492 (SMKG…PAEL). Basic residues predominate over residues 244 to 267 (PRRKGKGKGRKKGRGRKGKGRKKN). S349 is a glycosylation site (O-linked (Xyl...) (chondroitin sulfate) serine). Collagen-like domains are found at residues 391–440 (EGPP…GPPG) and 482–538 (GPVG…DGAR). Residues 392–1489 (GPPGAPGPQG…AGPPGPPGAP (1098 aa)) are triple-helical region. Residues 406-424 (SGPPGPPGFPGDPGPPGPA) show a composition bias toward pro residues. Low complexity-rich tracts occupy residues 426-439 (LPGIPGIDGIRGPP), 489-499 (RPGPVGLPGHP), and 597-619 (EPGPRGLLGPRGSPGPTGRPGVT). Positions 724 to 733 (QGEKGEKGED) are enriched in basic and acidic residues. Low complexity predominate over residues 765 to 792 (PKGQAGQAGEEGPPGSAGEKGKLGVPGL). 3 Collagen-like domains span residues 824-877 (GQPG…QGPP), 905-950 (GFQG…GLPG), and 951-989 (LEGREGAKGELGPPGPLGKEGPAGLRGFPGPKGGPGDPG). Positions 967–979 (LGKEGPAGLRGFP) are enriched in low complexity. Residues 1016 to 1025 (GPAGGIGLPG) are compositionally biased toward gly residues. 2 stretches are compositionally biased toward low complexity: residues 1116-1126 (ADGAQGRRGPP) and 1141-1152 (VGVIGPPGLQGL). The segment covering 1190 to 1199 (GLPGGVGQPG) has biased composition (gly residues). Positions 1213 to 1222 (PGPPGAPGIP) are enriched in pro residues. Residues 1234 to 1243 (SGPSGAAGPP) show a composition bias toward low complexity. The span at 1318-1330 (MGREGREGEKGAK) shows a compositional bias: basic and acidic residues. Over residues 1405–1416 (IGLIGLIGPPGE) the composition is skewed to low complexity. The span at 1429–1443 (QGPPGPKGDPGPPGP) shows a compositional bias: pro residues. The Collagen-like 6 domain maps to 1430–1488 (GPPGPKGDPGPPGPIGSLGHPGPPGVAGPLGQKGSKGSPGSMGPRGDTGPAGPPGPPGA). Positions 1458 to 1479 (PLGQKGSKGSPGSMGPRGDTGP) are enriched in low complexity. The region spanning 1514-1744 (EEVLASLTSL…GFELGPVCFS (231 aa)) is the Fibrillar collagen NC1 domain. 2 disulfide bridges follow: C1585-C1742 and C1651-C1696.

This sequence belongs to the fibrillar collagen family. As to quaternary structure, trimers of two alpha 1(V) and one alpha 2(V) chains in most tissues and trimers of one alpha 1(V), one alpha 2(V), and one alpha 3(V) chains in placenta. Prolines at the third position of the tripeptide repeating unit (G-X-Y) are hydroxylated in some or all of the chains. Detected in fibroblasts (at protein level). Detected in urine (at protein level).

It localises to the secreted. The protein localises to the extracellular space. It is found in the extracellular matrix. Functionally, type V collagen is a member of group I collagen (fibrillar forming collagen). It is a minor connective tissue component of nearly ubiquitous distribution. Type V collagen binds to DNA, heparan sulfate, thrombospondin, heparin, and insulin. In Homo sapiens (Human), this protein is Collagen alpha-3(V) chain (COL5A3).